A 128-amino-acid chain; its full sequence is Glycine cleavage system H protein (128 aa).

Positions 25-107 (IITVGITHHA…YGAGWFFKLK (83 aa)) constitute a Lipoyl-binding domain. Lys66 carries the N6-lipoyllysine modification.

Belongs to the GcvH family. The glycine cleavage system is composed of four proteins: P, T, L and H. (R)-lipoate is required as a cofactor.

Its function is as follows. The glycine cleavage system catalyzes the degradation of glycine. The H protein shuttles the methylamine group of glycine from the P protein to the T protein. This is Glycine cleavage system H protein from Neisseria meningitidis serogroup A / serotype 4A (strain DSM 15465 / Z2491).